A 384-amino-acid chain; its full sequence is MTEGVGLPLWLLAELTYRCPLQCPYCSNPLDYAQHKNELTTQEWFDVFDQARQMGAVQLGFSGGEPLVRQDLEQLVAHAHQLGFYTNLITSGMGLTEQRISHLKQAGLDHIQISFQASDPVVNDALAGSKHAFEQKYEMCRLVKKYDYPMVLNFVIHRHNIDQIDKIIELCLELNADTVELAICQFYGWAFLNRQGLLPTQEQLIRAERITNEYREKLKAQNHPCKLIFVVPDYYEERPKACMNGWGKIFFTVAPDGMALPCHAARQLPISFPNVREQSLSRIWYESTGFNHFRGDAWMPEGCRSCPDKDRDFGGCRCQAYMLTGNASNADPVCGKSPYHQFIEQARAESEIDSSLEKLVFRNSRNSKQFTVQQNIPVQNIVDD.

The 216-residue stretch at 5–220 folds into the Radical SAM core domain; it reads VGLPLWLLAE…TNEYREKLKA (216 aa). Cys19, Cys23, and Cys26 together coordinate [4Fe-4S] cluster.

Belongs to the radical SAM superfamily. PqqE family. In terms of assembly, interacts with PqqD. The interaction is necessary for activity of PqqE. The cofactor is [4Fe-4S] cluster.

The catalysed reaction is [PQQ precursor protein] + S-adenosyl-L-methionine = E-Y cross-linked-[PQQ precursor protein] + 5'-deoxyadenosine + L-methionine + H(+). The protein operates within cofactor biosynthesis; pyrroloquinoline quinone biosynthesis. Functionally, catalyzes the cross-linking of a glutamate residue and a tyrosine residue in the PqqA protein as part of the biosynthesis of pyrroloquinoline quinone (PQQ). The polypeptide is PqqA peptide cyclase (Acinetobacter baumannii (strain AB0057)).